The sequence spans 384 residues: NADH-quinone oxidoreductase subunit D 2 (384 aa).

This sequence belongs to the complex I 49 kDa subunit family. As to quaternary structure, NDH-1 is composed of 14 different subunits. Subunits NuoB, C, D, E, F, and G constitute the peripheral sector of the complex.

Its subcellular location is the cell membrane. It catalyses the reaction a quinone + NADH + 5 H(+)(in) = a quinol + NAD(+) + 4 H(+)(out). NDH-1 shuttles electrons from NADH, via FMN and iron-sulfur (Fe-S) centers, to quinones in the respiratory chain. The immediate electron acceptor for the enzyme in this species is believed to be a menaquinone. Couples the redox reaction to proton translocation (for every two electrons transferred, four hydrogen ions are translocated across the cytoplasmic membrane), and thus conserves the redox energy in a proton gradient. The sequence is that of NADH-quinone oxidoreductase subunit D 2 from Symbiobacterium thermophilum (strain DSM 24528 / JCM 14929 / IAM 14863 / T).